We begin with the raw amino-acid sequence, 184 residues long: NEDD8-conjugating enzyme UBC12 (184 aa).

Residues 10 to 29 (EKQRQAAQAQAPAQGRSAAS) are disordered. The segment covering 14–29 (QAAQAQAPAQGRSAAS) has biased composition (low complexity). The region spanning 30–174 (PAQLRVEKDL…VQATMMGGHL (145 aa)) is the UBC core domain. The active-site Glycyl thioester intermediate is C112.

It belongs to the ubiquitin-conjugating enzyme family. UBC12 subfamily.

The enzyme catalyses [E1 NEDD8-activating enzyme]-S-[NEDD8 protein]-yl-L-cysteine + [E2 NEDD8-conjugating enzyme]-L-cysteine = [E1 NEDD8-activating enzyme]-L-cysteine + [E2 NEDD8-conjugating enzyme]-S-[NEDD8-protein]-yl-L-cysteine.. It participates in protein modification; protein neddylation. Accepts the ubiquitin-like protein NEDD8/RUB1 from the UBA3-ULA1 E1 complex and catalyzes its covalent attachment to other proteins. The protein is NEDD8-conjugating enzyme UBC12 (UBC12) of Eremothecium gossypii (strain ATCC 10895 / CBS 109.51 / FGSC 9923 / NRRL Y-1056) (Yeast).